Here is an 81-residue protein sequence, read N- to C-terminus: Sulfur carrier protein TusA (81 aa).

The Cysteine persulfide intermediate role is filled by cysteine 19.

This sequence belongs to the sulfur carrier protein TusA family.

The protein resides in the cytoplasm. Functionally, sulfur carrier protein which probably makes part of a sulfur-relay system. This is Sulfur carrier protein TusA from Shewanella frigidimarina (strain NCIMB 400).